Here is a 319-residue protein sequence, read N- to C-terminus: 7,8-didemethyl-8-hydroxy-5-deazariboflavin synthase (319 aa).

The Radical SAM core domain maps to 6-236; it reads VTYSPAFTLV…AEITIQIPPN (231 aa). [4Fe-4S] cluster is bound by residues Cys-20, Cys-24, and Cys-27.

Belongs to the radical SAM superfamily. CofG family. As to quaternary structure, consists of two subunits, CofG and CofH. It depends on [4Fe-4S] cluster as a cofactor.

It carries out the reaction 5-amino-5-(4-hydroxybenzyl)-6-(D-ribitylimino)-5,6-dihydrouracil + S-adenosyl-L-methionine = 7,8-didemethyl-8-hydroxy-5-deazariboflavin + 5'-deoxyadenosine + L-methionine + NH4(+) + H(+). It functions in the pathway cofactor biosynthesis; coenzyme F0 biosynthesis. In terms of biological role, catalyzes the radical-mediated synthesis of 7,8-didemethyl-8-hydroxy-5-deazariboflavin from 5-amino-5-(4-hydroxybenzyl)-6-(D-ribitylimino)-5,6-dihydrouracil. This Gloeobacter violaceus (strain ATCC 29082 / PCC 7421) protein is 7,8-didemethyl-8-hydroxy-5-deazariboflavin synthase.